We begin with the raw amino-acid sequence, 445 residues long: E3 ubiquitin-protein ligase MYLIP (445 aa).

Residues 1–279 enclose the FERM domain; that stretch reads MLCYVTRPDA…ETHAFYRCDT (279 aa). The disordered stretch occupies residues 341–363; the sequence is RNDQSPPSSPLKSSDSSMSCSSC. Over residues 350-363 the composition is skewed to low complexity; the sequence is PLKSSDSSMSCSSC. Fe cation is bound by residues cysteine 360, cysteine 363, and cysteine 368. The segment at 387-422 adopts an RING-type zinc-finger fold; the sequence is CMVCCEEEINSTFCPCGHTVCCESCAAQLQSCPVCR. The segment at 431 to 433 is critical for homodimerization; the sequence is VYL.

Homodimer. Interacts with the E2 ubiquitin-conjugating enzyme, UBE2D1 (via RING-type zinc finger). Interacts with myosin regulatory light chain (MRLC) and TMEM4. Post-translationally, autoubiquitinated. Expressed in developing and adult brain, hippocampus, cerebellum, cerebral cortex, thalamus and substantia nigra. Predominantly found in neurons.

Its subcellular location is the cytoplasm. It is found in the cell membrane. The catalysed reaction is S-ubiquitinyl-[E2 ubiquitin-conjugating enzyme]-L-cysteine + [acceptor protein]-L-lysine = [E2 ubiquitin-conjugating enzyme]-L-cysteine + N(6)-ubiquitinyl-[acceptor protein]-L-lysine.. It functions in the pathway protein modification; protein ubiquitination. With respect to regulation, can bind 1 iron ion per dimer. Iron binding seems to decrease LDLR degradation activity. Functionally, E3 ubiquitin-protein ligase that mediates ubiquitination and subsequent proteasomal degradation of myosin regulatory light chain (MRLC), LDLR, VLDLR and LRP8. Activity depends on E2 enzymes of the UBE2D family. Proteasomal degradation of MRLC leads to inhibit neurite outgrowth in presence of NGF by counteracting the stabilization of MRLC by saposin-like protein (CNPY2/MSAP) and reducing CNPY2-stimulated neurite outgrowth. Acts as a sterol-dependent inhibitor of cellular cholesterol uptake by mediating ubiquitination and subsequent degradation of LDLR. The protein is E3 ubiquitin-protein ligase MYLIP (Mylip) of Rattus norvegicus (Rat).